Here is a 117-residue protein sequence, read N- to C-terminus: Appetite-regulating hormone (117 aa).

Positions 1–23 (MPSPGTVCSLLLLGMLWLDLAMA) are cleaved as a signal peptide. Serine 26 carries O-decanoyl serine; alternate lipidation. Residue serine 26 is the site of O-hexanoyl serine; alternate attachment. Serine 26 carries O-octanoyl serine; alternate lipidation. A disordered region spans residues 29–50 (SPEHQRVQQRKESKKPPAKLQP). Residues 31-43 (EHQRVQQRKESKK) show a composition bias toward basic and acidic residues. Residues 52-75 (ALAGWLRPEDGGQAEGAEDELEVR) constitute a propeptide, removed in mature form. The residue at position 98 (leucine 98) is a Leucine amide. The propeptide at 99 to 117 (GKFLQDILWEEAKEAPADK) is removed in mature form.

It belongs to the motilin family. Post-translationally, O-octanoylated by GOAT/MBOAT4. O-octanoylation or O-decanoylation is essential for ghrelin activity. The O-decanoylated forms Ghrelin-27-C10 and Ghrelin-28-C10 differ in the length of the carbon backbone of the carboxylic acid bound to Ser-26. A small fraction of ghrelin, ghrelin-28-C10:1, may be modified with a singly unsaturated carboxylic acid. Also O-acetylated and O-butyrylated on Ser-26 to minor levels. In terms of processing, amidation of Leu-98 is essential for obestatin activity. In terms of tissue distribution, highest level in stomach. All forms are found in serum as well. Other tissues compensate for the loss of ghrelin synthesis in the stomach following gastrectomy.

It localises to the secreted. Ghrelin is the ligand for growth hormone secretagogue receptor type 1 (GHSR). Induces the release of growth hormone from the pituitary. Has an appetite-stimulating effect, induces adiposity and stimulates gastric acid secretion. Involved in growth regulation. Functionally, may be the ligand for GPR39. May have an appetite-reducing effect resulting in decreased food intake. May reduce gastric emptying activity and jejunal motility. The protein is Appetite-regulating hormone (GHRL) of Homo sapiens (Human).